A 189-amino-acid polypeptide reads, in one-letter code: dCTP deaminase (189 aa).

DCTP-binding positions include 112-117 (KSTYAR), 136-138 (TLE), glutamine 157, tyrosine 171, and glutamine 181. The Proton donor/acceptor role is filled by glutamate 138.

The protein belongs to the dCTP deaminase family. Homotrimer.

It carries out the reaction dCTP + H2O + H(+) = dUTP + NH4(+). The protein operates within pyrimidine metabolism; dUMP biosynthesis; dUMP from dCTP (dUTP route): step 1/2. In terms of biological role, catalyzes the deamination of dCTP to dUTP. In Alcanivorax borkumensis (strain ATCC 700651 / DSM 11573 / NCIMB 13689 / SK2), this protein is dCTP deaminase.